Consider the following 226-residue polypeptide: Small ribosomal subunit protein uS2c (226 aa).

This sequence belongs to the universal ribosomal protein uS2 family.

The protein resides in the plastid. It is found in the chloroplast. The polypeptide is Small ribosomal subunit protein uS2c (rps2) (Ostreococcus tauri).